Reading from the N-terminus, the 359-residue chain is 4-hydroxy-3-methylbut-2-en-1-yl diphosphate synthase (flavodoxin) (359 aa).

[4Fe-4S] cluster is bound by residues cysteine 264, cysteine 267, cysteine 299, and glutamate 306.

This sequence belongs to the IspG family. The cofactor is [4Fe-4S] cluster.

It carries out the reaction (2E)-4-hydroxy-3-methylbut-2-enyl diphosphate + oxidized [flavodoxin] + H2O + 2 H(+) = 2-C-methyl-D-erythritol 2,4-cyclic diphosphate + reduced [flavodoxin]. The protein operates within isoprenoid biosynthesis; isopentenyl diphosphate biosynthesis via DXP pathway; isopentenyl diphosphate from 1-deoxy-D-xylulose 5-phosphate: step 5/6. Converts 2C-methyl-D-erythritol 2,4-cyclodiphosphate (ME-2,4cPP) into 1-hydroxy-2-methyl-2-(E)-butenyl 4-diphosphate. The polypeptide is 4-hydroxy-3-methylbut-2-en-1-yl diphosphate synthase (flavodoxin) (Helicobacter pylori (strain Shi470)).